A 275-amino-acid polypeptide reads, in one-letter code: MYYFYSPEMFAPYQWGLERDVSYAYMPYNSFYYGDYINSLPYAYIPQNYEVQMKADDRGSWTPFSWVEKYAYAFSGPYNKAEVALTFDDGPDLEFTPKILDKLKQHNVKATFFLLGENAEKFPNIVKRIANEGHVIGNHTYSHPNLAKVNEDEYRNQIIKTEEILNRLAGYAPKFIRPPYGEILENQLKWATEQNFMIVQWSVDTVDWKGVSADTITNNVLGNSFPGSVILQHSTPGGHLQGSVDALDKIIPQLKTKGARFVTLPSMFQTSKERK.

The NodB homology domain maps to 81–262; the sequence is AEVALTFDDG…QLKTKGARFV (182 aa). The active-site Proton acceptor is D88. Zn(2+)-binding residues include D89, H139, and H143. P179 carries the 2-hydroxyproline; partial modification. H233 serves as the catalytic Proton donor.

Belongs to the polysaccharide deacetylase family. Zn(2+) is required as a cofactor. In terms of processing, hydroxylated on Pro-179. Hydroxylation alters the active site and enhances significantly deacetylase activity, probably by creating a more favorable environment for transition-state stabilization. It might be autocatalytic.

The enzyme catalyses peptidoglycan-N-acetyl-D-glucosamine + H2O = peptidoglycan-D-glucosamine + acetate.. Its activity is regulated as follows. Deacetylase activity is stimulated by hydroxylation on Pro-179. Inhibited by CuCl(2) and ZnCl(2). Inhibited by the hydroxamate N-hydroxy-4-(naphthalene-1-yl)benzamide (NHNB). In terms of biological role, catalyzes the deacetylation of N-acetylglucosamine (GlcNAc) residues in peptidoglycan. Also acts on soluble chitin substrates and N-acetylchitooligomers. Acts on cell wall peptidoglycan from the Gram-positive bacteria B.cereus and B.subtilis and the Gram-negative bacterium H.pylori. Not active on acetylated xylan. The polypeptide is Peptidoglycan-N-acetylglucosamine deacetylase BC_1960 (Bacillus cereus (strain ATCC 14579 / DSM 31 / CCUG 7414 / JCM 2152 / NBRC 15305 / NCIMB 9373 / NCTC 2599 / NRRL B-3711)).